Reading from the N-terminus, the 489-residue chain is ATP-dependent zinc metalloprotease FtsH 3 (489 aa).

Residues 1–14 are Cytoplasmic-facing; sequence MNPRPVRPGGSLQQ. The chain crosses the membrane as a helical span at residues 15-31; the sequence is SLLALGSLSVAVGLAVW. Residues 32–489 are Extracellular-facing; the sequence is QQRTLGRGRS…GPRPARPAMN (458 aa). 95–102 contacts ATP; the sequence is GPPGTGKT. Position 315 (His-315) interacts with Zn(2+). Residue Glu-316 is part of the active site. Zn(2+)-binding residues include His-319 and Asp-391.

The protein in the central section; belongs to the AAA ATPase family. This sequence in the C-terminal section; belongs to the peptidase M41 family. As to quaternary structure, homohexamer. The cofactor is Zn(2+).

The protein resides in the cell membrane. Acts as a processive, ATP-dependent zinc metallopeptidase for both cytoplasmic and membrane proteins. Plays a role in the quality control of integral membrane proteins. The sequence is that of ATP-dependent zinc metalloprotease FtsH 3 from Sphaerobacter thermophilus (strain ATCC 49802 / DSM 20745 / KCCM 41009 / NCIMB 13125 / S 6022).